The chain runs to 62 residues: uncharacterized protein (62 aa).

Residues 1–18 show a composition bias toward polar residues; that stretch reads MTTNRVDPLEQTSPNTPT. The disordered stretch occupies residues 1–24; that stretch reads MTTNRVDPLEQTSPNTPTSKREKA.

This is an uncharacterized protein from Rickettsia conorii (strain ATCC VR-613 / Malish 7).